A 303-amino-acid polypeptide reads, in one-letter code: UDP-N-acetylenolpyruvoylglucosamine reductase (303 aa).

In terms of domain architecture, FAD-binding PCMH-type spans 27-191 (VGGPAARLYK…ISAKLQLTPG (165 aa)). Residue Arg-171 is part of the active site. Catalysis depends on Ser-220, which acts as the Proton donor. Glu-291 is an active-site residue.

It belongs to the MurB family. The cofactor is FAD.

It is found in the cytoplasm. The enzyme catalyses UDP-N-acetyl-alpha-D-muramate + NADP(+) = UDP-N-acetyl-3-O-(1-carboxyvinyl)-alpha-D-glucosamine + NADPH + H(+). It functions in the pathway cell wall biogenesis; peptidoglycan biosynthesis. Cell wall formation. The polypeptide is UDP-N-acetylenolpyruvoylglucosamine reductase (Legionella pneumophila (strain Paris)).